A 297-amino-acid chain; its full sequence is MTGINSQQEDIKIETLTQEEALELATALKQKLSHGELPNSDLESINKMVAGLGDNRGELRLTFAKSLGSIGEDAIPILCEALKNSSNVVIRRASAKTLNIIGNKKALPNLIEAFESDEDPVVQGSSAGAMATIGEPAIEPLLRILTESNCTAFQIGLINLALGFIGSKGPMGFNSAISSKNPEIRIAALNALAEQAQKSENKDVQALILNALKDQDSEVRAEAAIIVGKSMDQEEGAHQLHELLKDKNDQVRKNAALSLMKMEAVISIDFLDRAIRQESDEQVKGVMIVARNQLMKH.

This sequence belongs to the CpcE/RpcE/PecE family.

Functionally, an enzyme involved in the biosynthesis of bilin. The polypeptide is Bilin biosynthesis protein MpeU (mpeU) (Synechococcus sp. (strain WH8020)).